Here is a 149-residue protein sequence, read N- to C-terminus: UPF0260 protein PA1299 (149 aa).

It belongs to the UPF0260 family.

The polypeptide is UPF0260 protein PA1299 (Pseudomonas aeruginosa (strain ATCC 15692 / DSM 22644 / CIP 104116 / JCM 14847 / LMG 12228 / 1C / PRS 101 / PAO1)).